The primary structure comprises 294 residues: Acetylglutamate kinase (294 aa).

Substrate contacts are provided by residues Gly-69–Gly-70, Arg-91, and Asn-190.

It belongs to the acetylglutamate kinase family. ArgB subfamily.

Its subcellular location is the cytoplasm. The catalysed reaction is N-acetyl-L-glutamate + ATP = N-acetyl-L-glutamyl 5-phosphate + ADP. Its pathway is amino-acid biosynthesis; L-arginine biosynthesis; N(2)-acetyl-L-ornithine from L-glutamate: step 2/4. Catalyzes the ATP-dependent phosphorylation of N-acetyl-L-glutamate. This is Acetylglutamate kinase from Mycobacterium tuberculosis (strain CDC 1551 / Oshkosh).